A 92-amino-acid polypeptide reads, in one-letter code: Putative pterin-4-alpha-carbinolamine dehydratase (92 aa).

It belongs to the pterin-4-alpha-carbinolamine dehydratase family.

It carries out the reaction (4aS,6R)-4a-hydroxy-L-erythro-5,6,7,8-tetrahydrobiopterin = (6R)-L-erythro-6,7-dihydrobiopterin + H2O. This Haloarcula marismortui (strain ATCC 43049 / DSM 3752 / JCM 8966 / VKM B-1809) (Halobacterium marismortui) protein is Putative pterin-4-alpha-carbinolamine dehydratase.